A 635-amino-acid polypeptide reads, in one-letter code: MIAITLPDGSRREFPGPVTVAEVAQGIGAGLAKAALAGKVDGQLVDTSYRIDRDAELAIVTDKDADGVDVIRHSTAHLLAYAVKELYPEAQVTIGPVIENGFYYDFAYKRPFTPEDLAAIEKKMTELARKDEKVVREVWNRDEAVALFESMGEKYKAEIIASIPADQEIGLYREGSFVDLCRGPHVPSTGKLKVFKLMKVAGAYWRGDANNEMLQRIYGTAWARKEDQEAYLHMLEEAEKRDHRKLGKTLDLFHLQEEAPGMVFWHPKGWQVWQAVEQYMRGRLTDAGYDEVRTPQVMDRSLWEKSGHWQNYKENMFVTESEKRDYAIKPMNCPGHVQIFNHGLRSYRDLPLRLAEFGACHRNEPSGALHGLMRVRGFVQDDAHIFCTEEQIVAEAKAFNELAFSVYDDFGFKDVKVKLSLRPDQRAGSDEIWDHAEEGLRLALRACGVDWEELPGEGAFYGPKVEYHIKDAIGRSWQCGTLQLDLVLPERLDAEYVSEDNSRKRPVMLHRAILGSFERFLGILLENHAGALPAWLAPEQVVVMNIADSQAEYAESVVQLLQKQGFRAKADLRNEKITYKIREHSLQKVPYLLVVGDKERDASQVAVRARGNVDLGVMPVSAFVERLKNDVASKA.

Residues M1–T61 enclose the TGS domain. The segment at D242 to P533 is catalytic. 3 residues coordinate Zn(2+): C333, H384, and H510.

This sequence belongs to the class-II aminoacyl-tRNA synthetase family. In terms of assembly, homodimer. Zn(2+) is required as a cofactor.

It localises to the cytoplasm. The catalysed reaction is tRNA(Thr) + L-threonine + ATP = L-threonyl-tRNA(Thr) + AMP + diphosphate + H(+). Catalyzes the attachment of threonine to tRNA(Thr) in a two-step reaction: L-threonine is first activated by ATP to form Thr-AMP and then transferred to the acceptor end of tRNA(Thr). Also edits incorrectly charged L-seryl-tRNA(Thr). The polypeptide is Threonine--tRNA ligase (Cupriavidus necator (strain ATCC 17699 / DSM 428 / KCTC 22496 / NCIMB 10442 / H16 / Stanier 337) (Ralstonia eutropha)).